Reading from the N-terminus, the 75-residue chain is Metallothionein-like protein 1 (75 aa).

This sequence belongs to the metallothionein superfamily. Type 15 family.

In terms of biological role, metallothioneins have a high content of cysteine residues that bind various heavy metals. This Pisum sativum (Garden pea) protein is Metallothionein-like protein 1 (MTA).